The chain runs to 378 residues: UDP-N-acetylglucosamine--N-acetylmuramyl-(pentapeptide) pyrophosphoryl-undecaprenol N-acetylglucosamine transferase (378 aa).

UDP-N-acetyl-alpha-D-glucosamine contacts are provided by residues 14 to 16 (TGG), N125, R165, S193, and Q293.

It belongs to the glycosyltransferase 28 family. MurG subfamily.

The protein localises to the cell inner membrane. The catalysed reaction is di-trans,octa-cis-undecaprenyl diphospho-N-acetyl-alpha-D-muramoyl-L-alanyl-D-glutamyl-meso-2,6-diaminopimeloyl-D-alanyl-D-alanine + UDP-N-acetyl-alpha-D-glucosamine = di-trans,octa-cis-undecaprenyl diphospho-[N-acetyl-alpha-D-glucosaminyl-(1-&gt;4)]-N-acetyl-alpha-D-muramoyl-L-alanyl-D-glutamyl-meso-2,6-diaminopimeloyl-D-alanyl-D-alanine + UDP + H(+). It participates in cell wall biogenesis; peptidoglycan biosynthesis. In terms of biological role, cell wall formation. Catalyzes the transfer of a GlcNAc subunit on undecaprenyl-pyrophosphoryl-MurNAc-pentapeptide (lipid intermediate I) to form undecaprenyl-pyrophosphoryl-MurNAc-(pentapeptide)GlcNAc (lipid intermediate II). The sequence is that of UDP-N-acetylglucosamine--N-acetylmuramyl-(pentapeptide) pyrophosphoryl-undecaprenol N-acetylglucosamine transferase from Bartonella bacilliformis (strain ATCC 35685 / KC583 / Herrer 020/F12,63).